We begin with the raw amino-acid sequence, 141 residues long: Large ribosomal subunit protein uL11B (141 aa).

The protein belongs to the universal ribosomal protein uL11 family. As to quaternary structure, part of the ribosomal stalk of the 50S ribosomal subunit. Interacts with L10 and the large rRNA to form the base of the stalk. L10 forms an elongated spine to which L12 dimers bind in a sequential fashion forming a multimeric L10(L12)X complex. In terms of processing, one or more lysine residues are methylated.

Its function is as follows. Forms part of the ribosomal stalk which helps the ribosome interact with GTP-bound translation factors. The protein is Large ribosomal subunit protein uL11B of Halalkalibacterium halodurans (strain ATCC BAA-125 / DSM 18197 / FERM 7344 / JCM 9153 / C-125) (Bacillus halodurans).